The following is a 334-amino-acid chain: MSSNARPTSVESPLAAQAPTKLVIASRESRLAMWQAEYVRAALQKYYPACDVSILGMTTRGDQILDRSLAKVGGKGLFVKELEVALAEGRADLAVHSLKDVPMELPPGFVLSAILEREDPRDAFVSNDYADLAALPAGAVVGTSSLRREASLRARFPHLVIQPLRGNLDTRLSKLDRGDYAAIILAAAGLKRLGLSERIRAVIAPETSLPAAGQGALGIESRVDRHDVQAWLAPLHHAPTALAVTAERAVSRQLGGSCQVPLAAFAQWTDAGALRLRAFVASPDGRRKLAAEAEATPATPAEAEALGARVAQQMLDGGAHDILATLGADAPPAT.

Residue Cys-258 is modified to S-(dipyrrolylmethanemethyl)cysteine.

The protein belongs to the HMBS family. As to quaternary structure, monomer. Dipyrromethane serves as cofactor.

It carries out the reaction 4 porphobilinogen + H2O = hydroxymethylbilane + 4 NH4(+). It participates in porphyrin-containing compound metabolism; protoporphyrin-IX biosynthesis; coproporphyrinogen-III from 5-aminolevulinate: step 2/4. In terms of biological role, tetrapolymerization of the monopyrrole PBG into the hydroxymethylbilane pre-uroporphyrinogen in several discrete steps. The chain is Porphobilinogen deaminase from Ralstonia nicotianae (strain ATCC BAA-1114 / GMI1000) (Ralstonia solanacearum).